We begin with the raw amino-acid sequence, 661 residues long: Acetyl-coenzyme A synthetase (661 aa).

CoA contacts are provided by residues 197–200 and Thr320; that span reads RGGK. ATP contacts are provided by residues 396–398, 420–425, Asp511, and Arg526; these read GEP and DTWWQT. Ser534 contacts CoA. Arg537 is a binding site for ATP. Mg(2+)-binding residues include Val548 and Val553. Lys620 carries the N6-acetyllysine modification.

This sequence belongs to the ATP-dependent AMP-binding enzyme family. It depends on Mg(2+) as a cofactor. Acetylated. Deacetylation by the SIR2-homolog deacetylase activates the enzyme.

It catalyses the reaction acetate + ATP + CoA = acetyl-CoA + AMP + diphosphate. Functionally, catalyzes the conversion of acetate into acetyl-CoA (AcCoA), an essential intermediate at the junction of anabolic and catabolic pathways. AcsA undergoes a two-step reaction. In the first half reaction, AcsA combines acetate with ATP to form acetyl-adenylate (AcAMP) intermediate. In the second half reaction, it can then transfer the acetyl group from AcAMP to the sulfhydryl group of CoA, forming the product AcCoA. This chain is Acetyl-coenzyme A synthetase, found in Leptospira interrogans serogroup Icterohaemorrhagiae serovar copenhageni (strain Fiocruz L1-130).